Consider the following 161-residue polypeptide: Protein E6 (161 aa).

2 zinc fingers span residues 45–81 (CNFCGNFLTYLEICEFDEKRLSLIWKEYLVYACCRCC) and 118–154 (CQTCMKYLDAIEKLDICGRRRPFHLVRGSWKGICRLC).

Belongs to the papillomaviridae E6 protein family. In terms of assembly, forms homodimers. Interacts with ubiquitin-protein ligase UBE3A/E6-AP; this interaction stimulates UBE3A ubiquitin activity. Interacts with host BAK1.

It is found in the host cytoplasm. The protein resides in the host nucleus. Its function is as follows. Plays a major role in the induction and maintenance of cellular transformation. E6 associates with host UBE3A/E6-AP ubiquitin-protein ligase and modulates its activity. Protects host keratinocytes from apoptosis by mediating the degradation of host BAK1. May also inhibit host immune response. The polypeptide is Protein E6 (Homo sapiens (Human)).